Consider the following 213-residue polypeptide: Orotate phosphoribosyltransferase (213 aa).

Lys26 serves as a coordination point for 5-phospho-alpha-D-ribose 1-diphosphate. Orotate is bound at residue 34–35; that stretch reads FF. 5-phospho-alpha-D-ribose 1-diphosphate contacts are provided by residues 72 to 73, Arg99, Lys100, Lys103, His105, and 124 to 132; these read YK and DDVITAGTA. The orotate site is built by Thr128 and Arg156.

It belongs to the purine/pyrimidine phosphoribosyltransferase family. PyrE subfamily. As to quaternary structure, homodimer. Requires Mg(2+) as cofactor.

It catalyses the reaction orotidine 5'-phosphate + diphosphate = orotate + 5-phospho-alpha-D-ribose 1-diphosphate. It functions in the pathway pyrimidine metabolism; UMP biosynthesis via de novo pathway; UMP from orotate: step 1/2. In terms of biological role, catalyzes the transfer of a ribosyl phosphate group from 5-phosphoribose 1-diphosphate to orotate, leading to the formation of orotidine monophosphate (OMP). The polypeptide is Orotate phosphoribosyltransferase (Haemophilus ducreyi (strain 35000HP / ATCC 700724)).